We begin with the raw amino-acid sequence, 225 residues long: Uridylate kinase (225 aa).

An ATP-binding site is contributed by 9–10 (GS). Gly46 is a UMP binding site. Positions 47 and 51 each coordinate ATP. UMP is bound by residues Asp67 and 115 to 121 (THPAHTT). Thr141, Asn142, Tyr147, and Asp150 together coordinate ATP.

Belongs to the UMP kinase family. In terms of assembly, homohexamer.

It is found in the cytoplasm. The catalysed reaction is UMP + ATP = UDP + ADP. It functions in the pathway pyrimidine metabolism; CTP biosynthesis via de novo pathway; UDP from UMP (UMPK route): step 1/1. Inhibited by UTP. In terms of biological role, catalyzes the reversible phosphorylation of UMP to UDP. This is Uridylate kinase from Methanococcus aeolicus (strain ATCC BAA-1280 / DSM 17508 / OCM 812 / Nankai-3).